The chain runs to 136 residues: uncharacterized protein (136 aa).

It localises to the mitochondrion. This is an uncharacterized protein from Marchantia polymorpha (Common liverwort).